We begin with the raw amino-acid sequence, 190 residues long: Probable gluconokinase (190 aa).

Position 7 to 14 (7 to 14 (GVSGSGKT)) interacts with ATP.

It belongs to the gluconokinase GntK/GntV family.

The enzyme catalyses D-gluconate + ATP = 6-phospho-D-gluconate + ADP + H(+). It participates in carbohydrate acid metabolism; D-gluconate degradation. This Xenopus tropicalis (Western clawed frog) protein is Probable gluconokinase (idnk).